Consider the following 201-residue polypeptide: Coiled-coil domain-containing protein 195 (201 aa).

A coiled-coil region spans residues 4-38; that stretch reads DIQLMRLIQEMRAEIHKLEKENQALRMKLTASSQR. Disordered regions lie at residues 28–72 and 179–201; these read LRMK…DAAP and SKNS…IIAE. Low complexity predominate over residues 179–188; it reads SKNSSSLKHS. A compositionally biased stretch (polar residues) spans 189 to 201; sequence PNQATNQLSIIAE.

In Homo sapiens (Human), this protein is Coiled-coil domain-containing protein 195.